The primary structure comprises 106 residues: Nucleoid-associated protein Fjoh_2555 (106 aa).

The protein belongs to the YbaB/EbfC family. Homodimer.

The protein resides in the cytoplasm. It is found in the nucleoid. Its function is as follows. Binds to DNA and alters its conformation. May be involved in regulation of gene expression, nucleoid organization and DNA protection. This chain is Nucleoid-associated protein Fjoh_2555, found in Flavobacterium johnsoniae (strain ATCC 17061 / DSM 2064 / JCM 8514 / BCRC 14874 / CCUG 350202 / NBRC 14942 / NCIMB 11054 / UW101) (Cytophaga johnsonae).